The chain runs to 882 residues: Alanine--tRNA ligase (882 aa).

Residues histidine 567, histidine 571, cysteine 669, and histidine 673 each contribute to the Zn(2+) site.

Belongs to the class-II aminoacyl-tRNA synthetase family. Zn(2+) serves as cofactor.

The protein resides in the cytoplasm. It catalyses the reaction tRNA(Ala) + L-alanine + ATP = L-alanyl-tRNA(Ala) + AMP + diphosphate. In terms of biological role, catalyzes the attachment of alanine to tRNA(Ala) in a two-step reaction: alanine is first activated by ATP to form Ala-AMP and then transferred to the acceptor end of tRNA(Ala). Also edits incorrectly charged Ser-tRNA(Ala) and Gly-tRNA(Ala) via its editing domain. The sequence is that of Alanine--tRNA ligase from Thermosynechococcus vestitus (strain NIES-2133 / IAM M-273 / BP-1).